Here is a 1478-residue protein sequence, read N- to C-terminus: Serine/threonine-protein kinase BCK1/SLK1/SSP31 (1478 aa).

4 disordered regions span residues 1 to 70 (MPFL…TSSQ), 99 to 126 (TSFTNSSYKNDNGPSSLSDSRKSSGGNS), 217 to 359 (NVTN…RRHH), and 373 to 427 (FGSG…KGNL). Residues 29 to 49 (PTSSVASTKSSSKSPRATSRK) are compositionally biased toward low complexity. 2 stretches are compositionally biased toward polar residues: residues 58-70 (QFPNLTPNSTSSQ) and 99-110 (TSFTNSSYKNDN). Low complexity predominate over residues 111–126 (GPSSLSDSRKSSGGNS). Positions 223–233 (IRQKSASKLKS) are enriched in basic residues. 2 stretches are compositionally biased toward polar residues: residues 253–273 (DISNSRSTSESALSPTKSGPS) and 281–297 (LHSTSTHQKTKSASSLY). 2 stretches are compositionally biased toward low complexity: residues 298–320 (RRSFISLRGSSSSNASSAKSPSN) and 342–353 (SASPPASPSYPS). Composition is skewed to polar residues over residues 386–396 (NPQGHSLSSEN) and 407–420 (TNVSSPLKQSSLPT). Thr-407 carries the post-translational modification Phosphothreonine. A phosphoserine mark is found at Ser-411 and Ser-491. The segment at 644-671 (KPKPAPLTSENNVPLKSVKSKSSMRSGT) is disordered. Residues 659 to 671 (KSVKSKSSMRSGT) show a composition bias toward low complexity. The residue at position 747 (Ser-747) is a Phosphoserine. Disordered regions lie at residues 752–877 (LNLP…ASTH), 895–939 (KTDQ…RGNS), 960–1021 (ADAP…TQDK), and 1053–1116 (TEGI…TPKR). The span at 765–777 (TPITENESKSSFQ) shows a compositional bias: polar residues. Positions 779–809 (LRKDEGTEIDFNHRRESPYTKPELAPKREAP) are enriched in basic and acidic residues. Polar residues predominate over residues 813–827 (ANTSPQRTLSTSKQN). A Phosphoserine modification is found at Ser-816. 2 stretches are compositionally biased toward low complexity: residues 851–870 (QLLSSPIEASSSSPDSLTSS) and 914–925 (NRSNSTVSTSNS). The segment covering 967-977 (DSDDSDDDSSS) has biased composition (acidic residues). Positions 994-1011 (NENKKDEKSDNSSTHSDE) are enriched in basic and acidic residues. 2 positions are modified to phosphoserine: Ser-1058 and Ser-1061. Residues 1058–1083 (SPTSPKSLDSLLSPKNVASSRTEPST) are compositionally biased toward low complexity. Ser-1134 is modified (phosphoserine; by PKC). Positions 1175–1440 (WMKGEMIGKG…ANELLSHPFS (266 aa)) constitute a Protein kinase domain. ATP contacts are provided by residues 1181-1189 (IGKGSFGAV) and Lys-1204. Asp-1303 acts as the Proton acceptor in catalysis.

Belongs to the protein kinase superfamily. STE Ser/Thr protein kinase family. MAP kinase kinase kinase subfamily.

It localises to the cytoplasm. It carries out the reaction L-seryl-[protein] + ATP = O-phospho-L-seryl-[protein] + ADP + H(+). The enzyme catalyses L-threonyl-[protein] + ATP = O-phospho-L-threonyl-[protein] + ADP + H(+). Serine/threonine protein kinase involved in a signal transduction pathway that plays a role in yeast cell morphogenesis and cell growth. This pathway seems to start by SMP3; then involve the kinase PKC1 that may act on this kinase. BCK1 probably phosphorylates MKK1 and MKK2 which themselves phosphorylate the MPK1 kinase. This is Serine/threonine-protein kinase BCK1/SLK1/SSP31 (BCK1) from Saccharomyces cerevisiae (strain ATCC 204508 / S288c) (Baker's yeast).